We begin with the raw amino-acid sequence, 720 residues long: MDKSPTKTSIRTKFARHQPISDVDTTEQSSSCIKKDDRGLSSFGVQSSVFSRRSCRMSELEAKPTIISEDQRIAVRSEIGGSFSGFDDKVDNVFHSNNNLHGSPSTTELECPGIMNPRFLVGRSLNSRSRAVTRGSKRTSNVKENEGSIHRSDDQVSTENCSAKDEERDRDSGGVSSYGNKRSDEFCGTSPILEAKGFGISNTCFNCKKYGHRATECSAPQRECANCGDPNHRANECASWSKNGVQEPTKVTYVPVVDKMEEVFSMLKINAGDFFDKFFDASVQLVSRGQPVTIQPCKSFSDSDIPQSMRRNVERAGYTRTTPIQQYTLPLVADGKDILACAQTGSGKTAAFLLPIMSRLILEKDLNYGAEGGCYPRCIILTPTRELADQIYNEGRKFSYQSVMEIKPVYGGINVGYNKSQIMKGCTIIVGTIGRVKHFCEDGAIKLDKCRYLVLDEADRMIDSMGFGPEIEQIINYKNMPKNDKRQTMMFSATFPSSVQEAARKLLREDYTMITIDKIGAANKCVIQEFELCDRTSKVDKLLKLLGIDIDTYTTEKNSDVFVKKTIVFVAQQKMADTLASIMSAAQVPAITIHGAREQKERSAALKLFRSGAKPVLIATAVVERGLDIKGVDHVINYDMPNNIDDYIHRIGRTGRVGNSGRATSFISLADDVQILPQLVRTLADAEQVVPSWMKEAAGGTSNPNKFEKSIDTEEPEEAW.

Polar residues predominate over residues 1 to 11; the sequence is MDKSPTKTSIR. 2 disordered regions span residues 1-34 and 125-180; these read MDKSPTKTSIRTKFARHQPISDVDTTEQSSSCIK and LNSR…SYGN. Basic and acidic residues-rich tracts occupy residues 141–154 and 162–172; these read NVKENEGSIHRSDD and SAKDEERDRDS. CCHC-type zinc fingers lie at residues 202 to 219 and 222 to 239; these read NTCFNCKKYGHRATECSA and RECANCGDPNHRANECAS. The Q motif signature appears at 298–326; the sequence is KSFSDSDIPQSMRRNVERAGYTRTTPIQQ. Residues 329 to 513 enclose the Helicase ATP-binding domain; it reads LPLVADGKDI…RKLLREDYTM (185 aa). Position 342-349 (342-349) interacts with ATP; the sequence is AQTGSGKT. The DEAD box motif lies at 456–459; that stretch reads DEAD. The Helicase C-terminal domain maps to 549 to 698; it reads DIDTYTTEKN…VVPSWMKEAA (150 aa). The segment at 696-720 is disordered; the sequence is EAAGGTSNPNKFEKSIDTEEPEEAW.

Belongs to the DEAD box helicase family. DDX4/VASA subfamily. As to quaternary structure, interacts with csn-5. Interacts (via C-terminus) with kgb-1. Interacts with zyx-1.

Its subcellular location is the cytoplasm. The catalysed reaction is ATP + H2O = ADP + phosphate + H(+). In terms of biological role, probable ATP-binding RNA helicase. In Caenorhabditis elegans, this protein is ATP-dependent RNA helicase glh-3.